Consider the following 285-residue polypeptide: Glutamate racemase (285 aa).

Residues D28–S29 and Y60–G61 each bind substrate. C92 functions as the Proton donor/acceptor in the catalytic mechanism. N93 to T94 contacts substrate. C204 acts as the Proton donor/acceptor in catalysis. T205–H206 lines the substrate pocket.

It belongs to the aspartate/glutamate racemases family.

The enzyme catalyses L-glutamate = D-glutamate. It participates in cell wall biogenesis; peptidoglycan biosynthesis. Provides the (R)-glutamate required for cell wall biosynthesis. This chain is Glutamate racemase, found in Escherichia coli O7:K1 (strain IAI39 / ExPEC).